A 364-amino-acid polypeptide reads, in one-letter code: Cobalt-precorrin-5B C(1)-methyltransferase (364 aa).

It belongs to the CbiD family.

It carries out the reaction Co-precorrin-5B + S-adenosyl-L-methionine = Co-precorrin-6A + S-adenosyl-L-homocysteine. It functions in the pathway cofactor biosynthesis; adenosylcobalamin biosynthesis; cob(II)yrinate a,c-diamide from sirohydrochlorin (anaerobic route): step 6/10. Catalyzes the methylation of C-1 in cobalt-precorrin-5B to form cobalt-precorrin-6A. This is Cobalt-precorrin-5B C(1)-methyltransferase from Pseudomonas putida (strain GB-1).